The sequence spans 450 residues: Phosphoglucosamine mutase (450 aa).

The active-site Phosphoserine intermediate is the Ser-101. Residues Ser-101, Asp-242, Asp-244, and Asp-246 each coordinate Mg(2+). Ser-101 is subject to Phosphoserine.

The protein belongs to the phosphohexose mutase family. Mg(2+) serves as cofactor. Post-translationally, activated by phosphorylation.

The catalysed reaction is alpha-D-glucosamine 1-phosphate = D-glucosamine 6-phosphate. Functionally, catalyzes the conversion of glucosamine-6-phosphate to glucosamine-1-phosphate. This chain is Phosphoglucosamine mutase, found in Rhodopseudomonas palustris (strain BisB5).